The sequence spans 143 residues: Ribosome maturation factor RimP (143 aa).

It belongs to the RimP family.

The protein localises to the cytoplasm. Its function is as follows. Required for maturation of 30S ribosomal subunits. In Nitrosomonas eutropha (strain DSM 101675 / C91 / Nm57), this protein is Ribosome maturation factor RimP.